We begin with the raw amino-acid sequence, 479 residues long: ESX-1 secretion system ATPase EccB1 (479 aa).

Topologically, residues 1 to 44 (MAGFRLTTKVQVSGWRFLLRRVEHAIVRRDTRMFDDPLQFYSRA) are cytoplasmic. The chain crosses the membrane as a helical span at residues 45–65 (VFAGVVVSVLICLGAALMAYF). At 66 to 479 (KPLGKQGSDQ…NPRKVASGEG (414 aa)) the chain is on the periplasmic side. Residues C152 and C347 are joined by a disulfide bond.

This sequence belongs to the EccB family. As to quaternary structure, part of the ESX-1 / type VII secretion system (T7SS), which is composed of cytosolic and membrane components. The ESX-1 membrane complex is composed of EccB1, EccCa1, EccCb1, EccD1 and EccE1.

The protein resides in the cell inner membrane. Functionally, an ATPase. Part of the ESX-1 / type VII specialized secretion system (T7SS), which exports several proteins including EsxA and EsxB. Plays a role in DNA conjugation, in both donor and recipient strains. The chain is ESX-1 secretion system ATPase EccB1 from Mycolicibacterium smegmatis (strain MKD8) (Mycobacterium smegmatis).